The following is a 460-amino-acid chain: UDP-N-acetylmuramoylalanine--D-glutamate ligase (460 aa).

Gly-120–Thr-126 contributes to the ATP binding site.

The protein belongs to the MurCDEF family.

The protein resides in the cytoplasm. It catalyses the reaction UDP-N-acetyl-alpha-D-muramoyl-L-alanine + D-glutamate + ATP = UDP-N-acetyl-alpha-D-muramoyl-L-alanyl-D-glutamate + ADP + phosphate + H(+). Its pathway is cell wall biogenesis; peptidoglycan biosynthesis. Functionally, cell wall formation. Catalyzes the addition of glutamate to the nucleotide precursor UDP-N-acetylmuramoyl-L-alanine (UMA). The sequence is that of UDP-N-acetylmuramoylalanine--D-glutamate ligase from Lactobacillus delbrueckii subsp. bulgaricus (strain ATCC BAA-365 / Lb-18).